Here is a 469-residue protein sequence, read N- to C-terminus: Dihydrolipoyl dehydrogenase (469 aa).

FAD contacts are provided by residues 40–48 (EKAVLGGVC), Lys57, and Ala120. A disulfide bridge connects residues Cys48 and Cys53. NAD(+) is bound by residues 186 to 190 (GGGAI), Glu209, and 275 to 278 (AVGV). The FAD site is built by Asp317 and Ala325. Residue His450 is the Proton acceptor of the active site.

This sequence belongs to the class-I pyridine nucleotide-disulfide oxidoreductase family. In terms of assembly, homodimer. It depends on FAD as a cofactor.

It localises to the cytoplasm. The catalysed reaction is N(6)-[(R)-dihydrolipoyl]-L-lysyl-[protein] + NAD(+) = N(6)-[(R)-lipoyl]-L-lysyl-[protein] + NADH + H(+). Lipoamide dehydrogenase is a component of the alpha-ketoacid dehydrogenase complexes. This is Dihydrolipoyl dehydrogenase (lpd) from Chlorobaculum tepidum (strain ATCC 49652 / DSM 12025 / NBRC 103806 / TLS) (Chlorobium tepidum).